The sequence spans 4561 residues: StAR-related lipid transfer protein 9 (4561 aa).

Residues 3-384 form the Kinesin motor domain; sequence NVQVAVRVRP…MRYASNAKNI (382 aa). An ATP-binding site is contributed by 103-110; it reads GQTGSGKT. The span at 307 to 321 shows a compositional bias: low complexity; it reads SSGGDSGVPSTTSGA. A disordered region spans residues 307-330; the sequence is SSGGDSGVPSTTSGASSGGGPARR. The FHA domain maps to 482 to 533; the sequence is TKIGRIDSDQEQDIVLQGQWIERDHCTITSTCGVVILRPTQGARCTVNGREV. Disordered stretches follow at residues 784-805, 873-1064, and 1092-1153; these read SRAP…RRSR, SRWR…DTES, and WNLP…PSDS. 4 stretches are compositionally biased toward polar residues: residues 789 to 805, 884 to 903, 911 to 920, and 939 to 948; these read WASS…RRSR, ASTQ…SQEI, CQMSSQGQST, and RWASVNTKTG. Basic and acidic residues-rich tracts occupy residues 1046–1060 and 1124–1135; these read RPIK…RDLS and SRGEYSMKDHGH. Phosphoserine is present on Ser1164. Disordered stretches follow at residues 1288 to 1392, 1700 to 1767, 1959 to 1980, 2077 to 2120, 2320 to 2356, 2384 to 2427, 2439 to 2467, 2622 to 2656, 2712 to 2735, 2777 to 2800, 3002 to 3067, 3185 to 3207, 3246 to 3286, 3645 to 3703, 3790 to 3847, and 3863 to 3913; these read PSGD…SDMS, REAW…EEEN, ECKA…EEKQ, TNAT…ADRL, LATG…LGGS, VSTS…SSLD, FLLQ…LPNS, KPRQ…DPLP, KDSI…SEKI, TGLE…GNVG, RSVE…PGTL, AQTE…REQL, ELNL…TSLK, EGAA…LRPE, SDLA…PQQS, and QPKT…GRTT. Over residues 1300–1321 the composition is skewed to basic and acidic residues; sequence DIHEIQPHDEKPKHWLSIEEPK. Composition is skewed to polar residues over residues 1328 to 1360 and 1722 to 1741; these read LPQS…SQGL and PKLS…TTTK. Basic and acidic residues-rich tracts occupy residues 1754-1767 and 1970-1980; these read ELGK…EEEN and QSKEEPLEEKQ. A compositionally biased stretch (polar residues) spans 2077-2091; the sequence is TNATSNNNTQIQKLT. Residues 2096-2110 are compositionally biased toward basic and acidic residues; the sequence is RSREYVQTRESESEH. 2 stretches are compositionally biased toward polar residues: residues 2333 to 2351 and 2399 to 2408; these read TRSS…TTHT and TSTGSTTQEA. The stretch at 2414–2463 forms a coiled coil; it reads EATVQKERKNSSLDRISRQAEKRVSFLLQEDSNQGEEERQKAEETSEDQQ. Over residues 2417-2427 the composition is skewed to basic and acidic residues; sequence VQKERKNSSLD. Residues 2634–2647 show a composition bias toward basic and acidic residues; the sequence is DSSEVIEKRKEASR. Polar residues-rich tracts occupy residues 3039-3054 and 3187-3199; these read LKNN…SQTM and TEPS…THSQ. Positions 3689–3700 are enriched in pro residues; the sequence is PASPDGSPPPSL. The span at 3812-3835 shows a compositional bias: basic and acidic residues; sequence DSQRAESLDREGKSPLGKSSERLL. The span at 3863–3874 shows a compositional bias: polar residues; it reads QPKTTTGDQSKL. Residues 4185–4224 are a coiled coil; it reads SDIELMLQEYRRAREEAKVEIAQARDRLKERTEQEKMRIR. Positions 4344 to 4561 constitute an START domain; it reads PYQDLAKHIV…VAKLASFLRS (218 aa).

It belongs to the TRAFAC class myosin-kinesin ATPase superfamily. Kinesin family. Interacts with ATAD3A.

It is found in the cytoplasm. The protein localises to the cytoskeleton. Its subcellular location is the microtubule organizing center. The protein resides in the centrosome. It localises to the centriole. It is found in the nucleus. Its function is as follows. Microtubule-dependent motor protein required for spindle pole assembly during mitosis. Required to stabilize the pericentriolar material (PCM). This is StAR-related lipid transfer protein 9 (Stard9) from Mus musculus (Mouse).